The following is a 273-amino-acid chain: 4-hydroxy-tetrahydrodipicolinate reductase (273 aa).

NAD(+) is bound by residues 12–17 (GAGGRM) and E38. R39 contacts NADP(+). NAD(+) contacts are provided by residues 102-104 (GTT) and 126-129 (AANF). Residue H159 is the Proton donor/acceptor of the active site. Residue H160 participates in (S)-2,3,4,5-tetrahydrodipicolinate binding. The active-site Proton donor is K163. Position 169–170 (169–170 (GT)) interacts with (S)-2,3,4,5-tetrahydrodipicolinate.

The protein belongs to the DapB family. Homotetramer.

The protein localises to the cytoplasm. The enzyme catalyses (S)-2,3,4,5-tetrahydrodipicolinate + NAD(+) + H2O = (2S,4S)-4-hydroxy-2,3,4,5-tetrahydrodipicolinate + NADH + H(+). It catalyses the reaction (S)-2,3,4,5-tetrahydrodipicolinate + NADP(+) + H2O = (2S,4S)-4-hydroxy-2,3,4,5-tetrahydrodipicolinate + NADPH + H(+). Its pathway is amino-acid biosynthesis; L-lysine biosynthesis via DAP pathway; (S)-tetrahydrodipicolinate from L-aspartate: step 4/4. Catalyzes the conversion of 4-hydroxy-tetrahydrodipicolinate (HTPA) to tetrahydrodipicolinate. In Salmonella gallinarum (strain 287/91 / NCTC 13346), this protein is 4-hydroxy-tetrahydrodipicolinate reductase.